We begin with the raw amino-acid sequence, 533 residues long: Receptor homology region, transmembrane domain- and RING domain-containing protein 1 (533 aa).

Positions Met-1–Ala-26 are cleaved as a signal peptide. Over Asn-27–Ser-167 the chain is Lumenal. Asn-34 carries N-linked (GlcNAc...) asparagine glycosylation. A disulfide bridge connects residues Cys-68 and Cys-91. Positions Ala-84–Lys-145 constitute a PA domain. Residues Ile-168 to Phe-188 traverse the membrane as a helical segment. Residues Val-189 to Cys-533 lie on the Cytoplasmic side of the membrane. Residues Cys-236 to Lys-278 form an RING-type; atypical zinc finger. Disordered regions lie at residues Ser-309 to Gln-329 and Leu-440 to Ala-476. Residues Pro-448 to Leu-463 show a composition bias toward polar residues.

It localises to the prevacuolar compartment membrane. Its subcellular location is the protein storage vacuole membrane. The protein resides in the golgi apparatus membrane. Its function is as follows. Involved in the trafficking of vacuolar proteins. Functions probably as a sorting receptor for protein trafficking to the protein storage vacuole (PSV) by binding the C-terminal vacuolar sorting determinant (VSD) of vacuolar-sorted proteins. The polypeptide is Receptor homology region, transmembrane domain- and RING domain-containing protein 1 (Oryza sativa subsp. japonica (Rice)).